A 686-amino-acid chain; its full sequence is Mannan-binding lectin serine protease 2 (686 aa).

Positions 1 to 15 are cleaved as a signal peptide; it reads MRLLTLLGLLCGSVA. Residues 16 to 137 enclose the CUB 1 domain; it reads TPLGPKWPEP…TGFEAFYAAE (122 aa). Residues Glu-67, Asp-75, Asp-120, Ser-122, Asn-123, Asp-138, Ile-139, and Glu-141 each contribute to the Ca(2+) site. An intrachain disulfide couples Cys-72 to Cys-90. Residues 138 to 181 enclose the EGF-like; calcium-binding domain; that stretch reads DIDECQVAPGEAPTCDHHCHNHLGGFYCSCRAGYVLHRNKRTCS. 12 cysteine pairs are disulfide-bonded: Cys-142–Cys-156, Cys-152–Cys-165, Cys-167–Cys-180, Cys-184–Cys-211, Cys-241–Cys-259, Cys-300–Cys-348, Cys-328–Cys-361, Cys-366–Cys-412, Cys-396–Cys-430, Cys-434–Cys-552, Cys-598–Cys-618, and Cys-629–Cys-660. The Ca(2+) site is built by Asn-158, His-159, and Gly-162. Asn-158 carries the post-translational modification (3R)-3-hydroxyasparagine. The region spanning 184–296 is the CUB 2 domain; sequence CSGQVFTQRS…TGWKIHYTST (113 aa). Sushi domains are found at residues 298 to 363 and 364 to 432; these read QPCP…ACSI and VDCG…VCEP. Residues 445–684 enclose the Peptidase S1 domain; the sequence is IYGGQKAKPG…YIPWIENIIS (240 aa). Residues His-483 and Asp-532 each act as charge relay system in the active site. Ser-633 serves as the catalytic Charge relay system.

Belongs to the peptidase S1 family. As to quaternary structure, homodimer; disulfide-linked. Binds MBL2. Isoform 2 binds to MASP1. Binds SERPING1. Dimerization and MBL2 binding requires calcium ions. Post-translationally, the iron and 2-oxoglutarate dependent 3-hydroxylation of aspartate and asparagine is (R) stereospecific within EGF domains. In terms of processing, activated by cleavage after Arg-444. The uncleaved zymogen is inactive towards synthetic substrates, but has sufficient activity to effect autocatalytic cleavage. Plasma.

The protein localises to the secreted. The catalysed reaction is Selective cleavage after Arg-223 in complement component C2 (-Ser-Leu-Gly-Arg-|-Lys-Ile-Gln-Ile) and after Arg-76 in complement component C4 (-Gly-Leu-Gln-Arg-|-Ala-Leu-Glu-Ile).. Its function is as follows. Serum protease that plays an important role in the activation of the complement system via mannose-binding lectin. After activation by auto-catalytic cleavage it cleaves C2 and C4, leading to their activation and to the formation of C3 convertase. This Homo sapiens (Human) protein is Mannan-binding lectin serine protease 2 (MASP2).